The primary structure comprises 111 residues: uncharacterized protein (111 aa).

Residues 4 to 51 (LGQVKVLEEKVAKAVHLVQMLKEENAALRAEIDGRGKRITELEQLVLX) are a coiled coil.

This is an uncharacterized protein from Treponema pallidum (strain Nichols).